We begin with the raw amino-acid sequence, 853 residues long: Putative dipeptidyl aminopeptidase C14C4.15c (853 aa).

Residues 1-26 (MNAYEGDTLNNHGKSSTRQHWRKRSA) are disordered. Over 1–65 (MNAYEGDTLN…AKKRRRKKHR (65 aa)) the chain is Cytoplasmic. Residues 15–25 (SSTRQHWRKRS) are compositionally biased toward basic residues. A helical; Signal-anchor for type II membrane protein membrane pass occupies residues 66 to 86 (YIYLAVCLFFLASVLSCAIIF). At 87–853 (RFYLHTNREN…SGHFHHALYC (767 aa)) the chain is on the lumenal side. N-linked (GlcNAc...) asparagine glycans are attached at residues Asn96, Asn102, Asn472, Asn483, and Asn613. Active-site charge relay system residues include Ser719, Asp795, and His828.

Belongs to the peptidase S9B family.

It is found in the vacuole membrane. This chain is Putative dipeptidyl aminopeptidase C14C4.15c, found in Schizosaccharomyces pombe (strain 972 / ATCC 24843) (Fission yeast).